The sequence spans 429 residues: Saccharopine dehydrogenase-like oxidoreductase (429 aa).

At Ala-2 the chain carries N-acetylalanine. Phosphoserine is present on Ser-217.

This sequence belongs to the saccharopine dehydrogenase family.

This chain is Saccharopine dehydrogenase-like oxidoreductase (SCCPDH), found in Pongo abelii (Sumatran orangutan).